The following is a 416-amino-acid chain: Major facilitator superfamily domain-containing protein 3 (416 aa).

Transmembrane regions (helical) follow at residues 10-30, 40-60, 68-88, 99-119, 139-158, 170-190, 204-224, 252-272, 295-315, 324-344, 365-385, and 392-412; these read GLYLVQGLPYGLQSSLLPILL, VGLTKGLYAPWLLKLAWAPLV, VWLTFSTVCLGLVCGLLAVLP, TTVMGLLLLLNLGAAVQDVAL, QVVAYKLGSALAGGGLLVFF, LTATYWLAAALAWAAPALGRL, YLLQDLLAVPGTLWTAGFVLT, LWSGLGAATCSIAGSSLGGAL, LGGLACQTALLLHLNTPGASL, AALLSLCLQQFLGGVVTTATF, FLATLELLGKLLPGTLAGVLA, and LCFAAFLVLSALPVLDLRLAP.

The protein belongs to the major facilitator superfamily.

It is found in the membrane. The protein is Major facilitator superfamily domain-containing protein 3 (Mfsd3) of Rattus norvegicus (Rat).